Reading from the N-terminus, the 320-residue chain is MEMNIKFPVIDLSKLNGEERDQTMALIDDACQNWGFFELVNHGLPYDLMDNIERMTKEHYKKHMEQKFKEMLRSKGLDTLETEVEDVDWESTFYLHHLPQSNLYDIPDMSNEYRLAMKDFGKRLEILAEELLDLLCENLGLEKGYLKKVFHGTTGPTFATKLSNYPPCPKPEMIKGLRAHTDAGGLILLFQDDKVSGLQLLKDGDWVDVPPLKHSIVINLGDQLEVITNGKYKSVMHRVMTQKEGNRMSIASFYNPGSDAEISPATSLVDKDSKYPSFVFDDYMKLYAGLKFQAKEPRFEAMKNAEAAADLNPVAVVETF.

The stretch at 111-131 (NEYRLAMKDFGKRLEILAEEL) forms a coiled coil. The 102-residue stretch at 155–256 (GPTFATKLSN…RMSIASFYNP (102 aa)) folds into the Fe2OG dioxygenase domain. 3 residues coordinate Fe cation: H180, D182, and H237. R247 provides a ligand contact to 2-oxoglutarate.

Belongs to the iron/ascorbate-dependent oxidoreductase family. It depends on Fe(2+) as a cofactor.

The catalysed reaction is 1-aminocyclopropane-1-carboxylate + L-ascorbate + O2 = ethene + L-dehydroascorbate + hydrogen cyanide + CO2 + 2 H2O. The protein operates within alkene biosynthesis; ethylene biosynthesis via S-adenosyl-L-methionine; ethylene from S-adenosyl-L-methionine: step 2/2. In terms of biological role, enzyme involved in the ethylene biosynthesis. May promote stem elongation by maximizing the extensibility cells, possibly by activating ethylene biosynthesis, in response to very-long-chain fatty acids (VLCFAs C20:0 to C30:0). The polypeptide is 1-aminocyclopropane-1-carboxylate oxidase 3 (Arabidopsis thaliana (Mouse-ear cress)).